Reading from the N-terminus, the 242-residue chain is ATP-dependent dethiobiotin synthetase BioD (242 aa).

12-17 (EVGKTV) is an ATP binding site. Residue threonine 16 coordinates Mg(2+). Residue lysine 37 is part of the active site. Serine 41 contributes to the substrate binding site. Residues aspartate 51 and 112–115 (EGAG) contribute to the ATP site. Positions 51 and 112 each coordinate Mg(2+).

Belongs to the dethiobiotin synthetase family. In terms of assembly, homodimer. Requires Mg(2+) as cofactor.

The protein resides in the cytoplasm. It carries out the reaction (7R,8S)-7,8-diammoniononanoate + CO2 + ATP = (4R,5S)-dethiobiotin + ADP + phosphate + 3 H(+). It functions in the pathway cofactor biosynthesis; biotin biosynthesis; biotin from 7,8-diaminononanoate: step 1/2. Functionally, catalyzes a mechanistically unusual reaction, the ATP-dependent insertion of CO2 between the N7 and N8 nitrogen atoms of 7,8-diaminopelargonic acid (DAPA, also called 7,8-diammoniononanoate) to form a ureido ring. The chain is ATP-dependent dethiobiotin synthetase BioD from Bacillus cereus (strain B4264).